The primary structure comprises 396 residues: Phosphoglycerate kinase (396 aa).

Substrate-binding positions include 21-23 (DLN), arginine 36, 59-62 (HFGR), arginine 118, and arginine 151. ATP contacts are provided by residues lysine 201, glutamate 323, and 353–356 (GGDT).

The protein belongs to the phosphoglycerate kinase family. In terms of assembly, monomer.

It localises to the cytoplasm. The enzyme catalyses (2R)-3-phosphoglycerate + ATP = (2R)-3-phospho-glyceroyl phosphate + ADP. It functions in the pathway carbohydrate degradation; glycolysis; pyruvate from D-glyceraldehyde 3-phosphate: step 2/5. The chain is Phosphoglycerate kinase from Rhodospirillum centenum (strain ATCC 51521 / SW).